A 114-amino-acid chain; its full sequence is MSLRSERVGEQLKKEISEIINQKLKNPNVGFVTVTEVEVTGDLSLASVYVTVLGEEKERKKSLEGLEKSKGFIKSEIAHRMDLRIVPDLKFKYDESIDYGNKIERMIAELNRDK.

Belongs to the RbfA family. As to quaternary structure, monomer. Binds 30S ribosomal subunits, but not 50S ribosomal subunits or 70S ribosomes.

The protein resides in the cytoplasm. In terms of biological role, one of several proteins that assist in the late maturation steps of the functional core of the 30S ribosomal subunit. Associates with free 30S ribosomal subunits (but not with 30S subunits that are part of 70S ribosomes or polysomes). Required for efficient processing of 16S rRNA. May interact with the 5'-terminal helix region of 16S rRNA. In Macrococcus caseolyticus (strain JCSC5402) (Macrococcoides caseolyticum), this protein is Ribosome-binding factor A.